The primary structure comprises 559 residues: Hepatocyte nuclear factor 1-alpha (559 aa).

Residues 13–44 (GPGRLSALQEQLIWALLGSGLSREVLVHALGE) enclose the HNF-p1 domain. The tract at residues 14–43 (PGRLSALQEQLIWALLGSGLSREVLVHALG) is dimerization. Residues 49–62 (RVTPGAEKGDRGDG) show a composition bias toward basic and acidic residues. The segment at 49–73 (RVTPGAEKGDRGDGESSEEGEMDFP) is disordered. The POU-specific atypical domain occupies 78 to 173 (QELEALAPEE…ISQQFTNARH (96 aa)). Interaction with DNA stretches follow at residues 121–123 (QRE), 134–140 (HLSQHLN), 146–149 (KNQK), 192–195 (RFKW), 252–254 (RVY), and 259–262 (NRRK). Residues 186–194 (RKGRRNRFK) carry the Nuclear localization signal motif. Residues 188-268 (GRRNRFKWGP…NRRKEEAFRH (81 aa)) constitute a DNA-binding region (homeobox; HNF1-type). Positions 492–559 (TDPEEQTDQP…IPAQMVSTAQ (68 aa)) are disordered. Over residues 499–522 (DQPIQEDSLHLQSPSPVPVSSGNL) the composition is skewed to polar residues.

Belongs to the HNF1 homeobox family. As to quaternary structure, binds DNA as a dimer. Expressed in liver, intestine, spleen and kidney.

The protein localises to the nucleus. Functionally, transcriptional activator that regulates the tissue specific expression of multiple genes, especially in pancreas and liver. Binds to the promoter of the albumin gene. This Salmo salar (Atlantic salmon) protein is Hepatocyte nuclear factor 1-alpha (hnf1a).